Consider the following 283-residue polypeptide: Homeobox protein six1a (283 aa).

The homeobox DNA-binding region spans 124–183 (GEETSYCFKEKSRSVLREWYTHNPYPSPREKRELAEATGLTTTQVSNWFKNRRQRDRAAE). The tract at residues 168-264 (VSNWFKNRRQ…PLHGMQGHPH (97 aa)) is disordered. Basic and acidic residues predominate over residues 179 to 190 (DRAAEAKERENG). Residues 237-248 (MNNPAAPAYPMP) are compositionally biased toward low complexity.

This sequence belongs to the SIX/Sine oculis homeobox family.

It localises to the nucleus. It is found in the cytoplasm. Transcription factor that is involved in the regulation of cell proliferation, apoptosis and embryonic development. Depending on context, functions as a transcriptional repressor or activator. Plays an important role in the development of the inner ear, where it promotes hair cell proliferation and inhibits proliferation of neural progenitor cells. Required for normal myogenesis. Plays a role in the development of fast muscle fibers throughout the body, as well as the development of craniofacial muscles. In Danio rerio (Zebrafish), this protein is Homeobox protein six1a (six1a).